A 310-amino-acid chain; its full sequence is L-lactate dehydrogenase (310 aa).

NAD(+) contacts are provided by residues 10–11 (MV), D32, Y62, and 76–77 (GV). Residues Q79, R85, and 117–120 (NPVD) each bind substrate. Residues 115–117 (ATN) and S140 contribute to the NAD(+) site. Residue 145-148 (DTAR) participates in substrate binding. Beta-D-fructose 1,6-bisphosphate is bound by residues R150 and H165. H172 (proton acceptor) is an active-site residue. Y218 is modified (phosphotyrosine). A substrate-binding site is contributed by T227.

It belongs to the LDH/MDH superfamily. LDH family. As to quaternary structure, homotetramer.

The protein localises to the cytoplasm. It catalyses the reaction (S)-lactate + NAD(+) = pyruvate + NADH + H(+). The protein operates within fermentation; pyruvate fermentation to lactate; (S)-lactate from pyruvate: step 1/1. Allosterically activated by fructose 1,6-bisphosphate (FBP). Catalyzes the conversion of lactate to pyruvate. The protein is L-lactate dehydrogenase of Thermus thermophilus (strain ATCC 27634 / DSM 579 / HB8).